Consider the following 121-residue polypeptide: Small ribosomal subunit protein uS13 (121 aa).

A disordered region spans residues 97-121 (VRGQRTRTNARTRRGARKTVAGKKK). Basic residues predominate over residues 100 to 121 (QRTRTNARTRRGARKTVAGKKK).

It belongs to the universal ribosomal protein uS13 family. Part of the 30S ribosomal subunit. Forms a loose heterodimer with protein S19. Forms two bridges to the 50S subunit in the 70S ribosome.

In terms of biological role, located at the top of the head of the 30S subunit, it contacts several helices of the 16S rRNA. In the 70S ribosome it contacts the 23S rRNA (bridge B1a) and protein L5 of the 50S subunit (bridge B1b), connecting the 2 subunits; these bridges are implicated in subunit movement. Contacts the tRNAs in the A and P-sites. The polypeptide is Small ribosomal subunit protein uS13 (Synechococcus sp. (strain CC9902)).